The primary structure comprises 553 residues: Glutamate--tRNA ligase (553 aa).

The 'HIGH' region signature appears at 41–51 (PSPTGFQHIGG). A 'KMSKS' region motif is present at residues 293–297 (KLSKR). Lys-296 is an ATP binding site.

This sequence belongs to the class-I aminoacyl-tRNA synthetase family. Glutamate--tRNA ligase type 1 subfamily. In terms of assembly, monomer.

It is found in the cytoplasm. It catalyses the reaction tRNA(Glu) + L-glutamate + ATP = L-glutamyl-tRNA(Glu) + AMP + diphosphate. Its function is as follows. Catalyzes the attachment of glutamate to tRNA(Glu) in a two-step reaction: glutamate is first activated by ATP to form Glu-AMP and then transferred to the acceptor end of tRNA(Glu). The polypeptide is Glutamate--tRNA ligase (Clostridium beijerinckii (strain ATCC 51743 / NCIMB 8052) (Clostridium acetobutylicum)).